Consider the following 240-residue polypeptide: Ribonuclease PH (240 aa).

Phosphate contacts are provided by residues R87 and 125–127 (GTR).

The protein belongs to the RNase PH family. In terms of assembly, homohexameric ring arranged as a trimer of dimers.

The enzyme catalyses tRNA(n+1) + phosphate = tRNA(n) + a ribonucleoside 5'-diphosphate. Phosphorolytic 3'-5' exoribonuclease that plays an important role in tRNA 3'-end maturation. Removes nucleotide residues following the 3'-CCA terminus of tRNAs; can also add nucleotides to the ends of RNA molecules by using nucleoside diphosphates as substrates, but this may not be physiologically important. Probably plays a role in initiation of 16S rRNA degradation (leading to ribosome degradation) during starvation. The polypeptide is Ribonuclease PH (Crocosphaera subtropica (strain ATCC 51142 / BH68) (Cyanothece sp. (strain ATCC 51142))).